The chain runs to 437 residues: Aminopeptidase G (437 aa).

Active-site residues include Cys-70, His-361, and Asn-382.

Belongs to the peptidase C1 family.

It is found in the cytoplasm. This chain is Aminopeptidase G (pepG), found in Lactobacillus delbrueckii subsp. lactis.